We begin with the raw amino-acid sequence, 461 residues long: Phosphatidate cytidylyltransferase 1 (461 aa).

The tract at residues 1–67 (MLELRHRGSC…IPEIPPSSDR (67 aa)) is disordered. Arginine 7 carries the post-translational modification Omega-N-methylarginine. Residues 20–56 (PHREGEAAGGDHETESTSDKETDIDDRYGDLDSRTDS) are compositionally biased toward basic and acidic residues. Residues serine 35 and serine 37 each carry the phosphoserine modification. 6 helical membrane passes run 96 to 116 (MISL…LLVL), 149 to 169 (FLLC…FATF), 183 to 203 (HRFI…LSLV), 230 to 250 (LVIQ…SSVI), 279 to 299 (GFIG…YVLS), and 357 to 377 (IALS…ASGF).

The protein belongs to the CDS family. In terms of assembly, homodimer. Interacts with FOS; this interaction may enhance catalytic activity. It depends on Mg(2+) as a cofactor. In terms of tissue distribution, expressed in adult tissues such as placenta, brain, small intestine, ovary, testis and prostate. Highly expressed in fetal kidney, lung and brain. Lower level in fetal liver.

It is found in the endoplasmic reticulum membrane. The enzyme catalyses a 1,2-diacyl-sn-glycero-3-phosphate + CTP + H(+) = a CDP-1,2-diacyl-sn-glycerol + diphosphate. It carries out the reaction 1-octadecanoyl-2-(5Z,8Z,11Z,14Z-eicosatetraenoyl)-sn-glycero-3-phosphate + CTP + H(+) = 1-octadecanoyl-2-(5Z,8Z,11Z,14Z-eicosatetraenoyl)-sn-glycero-3-cytidine-5'-diphosphate + diphosphate. The catalysed reaction is 1-octadecanoyl-2-(9Z,12Z-octadecadienoyl)-sn-glycero-3-phosphate + CTP + H(+) = 1-octadecanoyl-2-(9Z,12Z-octadecadienoyl)-sn-glycero-3-cytidine-5'-diphosphate + diphosphate. It catalyses the reaction 1-hexadecanoyl-2-(5Z,8Z,11Z,14Z-eicosatetraenoyl)-sn-glycero-3-phosphate + CTP + H(+) = 1-hexadecanoyl-2-(5Z,8Z,11Z,14Z-eicosatetraenoyl)-sn-glycero-3-cytidine-5'-diphosphate + diphosphate. The enzyme catalyses 1,2-di-(5Z,8Z,11Z,14Z)-eicosatetraenoyl-sn-glycero-3-phosphate + CTP + H(+) = 1,2-di-(5Z,8Z,11Z,14Z-eicosatetraenoyl)-sn-glycero-3-cytidine-5'-diphosphate + diphosphate. It carries out the reaction 1-octadecanoyl-2-(9Z-octadecenoyl)-sn-glycero-3-phosphate + CTP + H(+) = 1-octadecanoyl-2-(9Z-octadecenoyl)-sn-glycero-3-cytidine-5'-diphosphate + diphosphate. The catalysed reaction is 1-octadecanoyl-2-(4Z,7Z,10Z,13Z,16Z,19Z-docosahexaenoyl)-sn-glycero-3-phosphate + CTP + H(+) = 1-octadecanoyl-2-(4Z,7Z,10Z,13Z,16Z,19Z-docosahexaenoyl)-sn-glycero-3-cytidine-5'-diphosphate + diphosphate. It catalyses the reaction 1,2-di-(9Z,12Z-octadecadienoyl)-sn-glycero-3-phosphate + CTP + H(+) = 1,2-di-(9Z,12Z-octadecadienoyl)-sn-glycero-3-cytidine-5'-diphosphate + diphosphate. The enzyme catalyses 1,2-di-(9Z-octadecenoyl)-sn-glycero-3-phosphate + CTP + H(+) = 1,2-di-(9Z-octadecenoyl)-sn-glycero-3-cytidine-5'-diphosphate + diphosphate. Its pathway is phospholipid metabolism; CDP-diacylglycerol biosynthesis; CDP-diacylglycerol from sn-glycerol 3-phosphate: step 3/3. Its activity is regulated as follows. Inhibited by its anionic phospholipid end products, with phosphatidylinositol-(4,5)- bisphosphate showing the strongest inhibition. Functionally, catalyzes the conversion of phosphatidic acid (PA) to CDP-diacylglycerol (CDP-DAG), an essential intermediate in the synthesis of phosphatidylglycerol, cardiolipin and phosphatidylinositol. Exhibits almost no acyl chain preference for PA, showing no discrimination for the sn-1/sn-2 acyl chain composition of PAs. Plays an important role in regulating the growth of lipid droplets which are storage organelles at the center of lipid and energy homeostasis. Positively regulates the differentiation and development of adipocytes. The polypeptide is Phosphatidate cytidylyltransferase 1 (Homo sapiens (Human)).